Consider the following 199-residue polypeptide: Large ribosomal subunit protein bL25 (199 aa).

This sequence belongs to the bacterial ribosomal protein bL25 family. CTC subfamily. In terms of assembly, part of the 50S ribosomal subunit; part of the 5S rRNA/L5/L18/L25 subcomplex. Contacts the 5S rRNA. Binds to the 5S rRNA independently of L5 and L18.

In terms of biological role, this is one of the proteins that binds to the 5S RNA in the ribosome where it forms part of the central protuberance. The protein is Large ribosomal subunit protein bL25 of Chloroherpeton thalassium (strain ATCC 35110 / GB-78).